The following is a 102-amino-acid chain: Cell division topological specificity factor (102 aa).

Belongs to the MinE family.

Its function is as follows. Prevents the cell division inhibition by proteins MinC and MinD at internal division sites while permitting inhibition at polar sites. This ensures cell division at the proper site by restricting the formation of a division septum at the midpoint of the long axis of the cell. The chain is Cell division topological specificity factor from Synechococcus sp. (strain CC9605).